The chain runs to 581 residues: uncharacterized protein (581 aa).

This is an uncharacterized protein from Borreliella burgdorferi (strain ATCC 35210 / DSM 4680 / CIP 102532 / B31) (Borrelia burgdorferi).